A 473-amino-acid polypeptide reads, in one-letter code: UDP-glycosyltransferase 71A27 (473 aa).

Histidine 15 acts as the Proton acceptor in catalysis. An anthocyanidin is bound at residue histidine 15. The active-site Charge relay is aspartate 117. 7 residues coordinate UDP-alpha-D-glucose: alanine 345, glutamine 347, histidine 362, tryptophan 365, asparagine 366, serine 367, and glutamate 370. Glycine 385 contributes to the an anthocyanidin binding site. 2 residues coordinate UDP-alpha-D-glucose: glutamate 386 and glutamine 387.

Belongs to the UDP-glycosyltransferase family.

The enzyme catalyses (20S)-protopanaxadiol + UDP-alpha-D-glucose = (20S)-ginsenoside C-K + UDP + H(+). It functions in the pathway secondary metabolite biosynthesis; terpenoid biosynthesis. Its function is as follows. Component of the triterpene saponins (e.g. PPD-type ginsenosides or panaxosides) biosynthetic pathways. Glycosyltransferase that catalyzes the biosynthesis of compound K from protopanaxadiol (PPD). The polypeptide is UDP-glycosyltransferase 71A27 (Panax ginseng (Korean ginseng)).